Consider the following 138-residue polypeptide: Phosphoribosyl-AMP cyclohydrolase (138 aa).

Residue D84 coordinates Mg(2+). Residue C85 participates in Zn(2+) binding. Mg(2+)-binding residues include D86 and D88. 2 residues coordinate Zn(2+): C102 and C109.

This sequence belongs to the PRA-CH family. In terms of assembly, homodimer. The cofactor is Mg(2+). Zn(2+) is required as a cofactor.

Its subcellular location is the cytoplasm. It catalyses the reaction 1-(5-phospho-beta-D-ribosyl)-5'-AMP + H2O = 1-(5-phospho-beta-D-ribosyl)-5-[(5-phospho-beta-D-ribosylamino)methylideneamino]imidazole-4-carboxamide. It participates in amino-acid biosynthesis; L-histidine biosynthesis; L-histidine from 5-phospho-alpha-D-ribose 1-diphosphate: step 3/9. Functionally, catalyzes the hydrolysis of the adenine ring of phosphoribosyl-AMP. This is Phosphoribosyl-AMP cyclohydrolase from Burkholderia vietnamiensis (strain G4 / LMG 22486) (Burkholderia cepacia (strain R1808)).